The sequence spans 666 residues: MTKDIIAESVQNDLRYLQLLARSFPTIADASTEIINLEAILNLPKGTEHFLSDLHGEDQAFSHVLRNASGAVKRKVNEIFSNTLRESEKKELCSLIYYPEDKLELIKSQEQDLEDWYQVTLNQLVRVCRNVSSKYTRSKVRKALPKEFSYIIQELLHESSVEPNKSAYVDQIICTIISTGRADDFIIAMCNLIQRLTIDLLHIIGDIYDRGPGAHLIMDILCDYHNFDVQWGNHDILWMGAASGNLVSIANVIRMCLRFGNMATLEDGYGINLLPLATFAMEAYGDDPCALFMPKTKFADNAMDEKTTRLIAQMHKAITIIQFKLEGEIIRRRPEFEMDDRMLLHHIDLKRGVVHIDGKDYTLKDTNWPTLDPKDPYRLSIEEEDLIRKILHSFESSEKMKKHMRCFFRHGGMYQVCNSNLLFHASIPMNPDGTFKSVRILGQDYKGRALLDRVDQLIRTAYFKTGEQEEVEYAHDYIWYLWGGKDSPLFDKSKMATFERAFIEEAETHKEEKGAYYTLREQEEICDKILDEFGVTGMHRHIINGHVPVRSNQGENPIKANGKMLVIDGGFSRPYHLETGIAGYTLVYHSRGFQLVQHEPFESRAKAIEEGLDIKSTTIVVELSSHRQMVKDTDKGADLQSQIKDLEKLLYAYRNGLIKEKERMER.

This sequence belongs to the FBPase class 3 family. Mn(2+) is required as a cofactor.

The enzyme catalyses beta-D-fructose 1,6-bisphosphate + H2O = beta-D-fructose 6-phosphate + phosphate. The protein operates within carbohydrate biosynthesis; gluconeogenesis. This chain is Fructose-1,6-bisphosphatase class 3, found in Parabacteroides distasonis (strain ATCC 8503 / DSM 20701 / CIP 104284 / JCM 5825 / NCTC 11152).